The following is a 508-amino-acid chain: ATP synthase subunit alpha (508 aa).

169-176 lines the ATP pocket; the sequence is GDRQTGKT.

The protein belongs to the ATPase alpha/beta chains family. As to quaternary structure, F-type ATPases have 2 components, CF(1) - the catalytic core - and CF(0) - the membrane proton channel. CF(1) has five subunits: alpha(3), beta(3), gamma(1), delta(1), epsilon(1). CF(0) has three main subunits: a(1), b(2) and c(9-12). The alpha and beta chains form an alternating ring which encloses part of the gamma chain. CF(1) is attached to CF(0) by a central stalk formed by the gamma and epsilon chains, while a peripheral stalk is formed by the delta and b chains.

The protein resides in the cell inner membrane. The enzyme catalyses ATP + H2O + 4 H(+)(in) = ADP + phosphate + 5 H(+)(out). In terms of biological role, produces ATP from ADP in the presence of a proton gradient across the membrane. The alpha chain is a regulatory subunit. The polypeptide is ATP synthase subunit alpha (Allorhizobium ampelinum (strain ATCC BAA-846 / DSM 112012 / S4) (Agrobacterium vitis (strain S4))).